We begin with the raw amino-acid sequence, 178 residues long: Oligoribonuclease (178 aa).

The Exonuclease domain maps to 7–168 (LIWIDLEMTG…DDIRESIAEL (162 aa)). Tyrosine 128 is a catalytic residue.

The protein belongs to the oligoribonuclease family.

It is found in the cytoplasm. 3'-to-5' exoribonuclease specific for small oligoribonucleotides. This Francisella tularensis subsp. tularensis (strain FSC 198) protein is Oligoribonuclease.